Consider the following 392-residue polypeptide: Frizzled-9 (392 aa).

Topologically, residues 1 to 35 are extracellular; sequence ACDNPEKFQYVEKSLSCAPRCSPGVDVYWSREDKD. Residues 36-56 form a helical membrane-spanning segment; that stretch reads FAFVWMAVWSTLCFVSTAFTV. At 57-72 the chain is on the cytoplasmic side; that stretch reads LTFLLDPHRFQYPERP. Residues 73 to 93 form a helical membrane-spanning segment; that stretch reads IIFLSMCYNVYSVAFIIRSVA. At 94–119 the chain is on the extracellular side; it reads GAETIACDRENGELYIIQEGLESTGC. The helical transmembrane segment at 120-140 threads the bilayer; that stretch reads TIVFLILYYFGMASSLWWVVL. The Cytoplasmic portion of the chain corresponds to 141–161; sequence TLTWFLAAGKKWGHEAIEAHS. The helical transmembrane segment at 162–182 threads the bilayer; sequence SYFHMAAWGIPAMKTIVILTM. Residues 183 to 206 are Extracellular-facing; it reads RKVAGDELTGLCYVGSMDVSALTG. The helical transmembrane segment at 207–227 threads the bilayer; sequence FVLIPLSCYLVVGTSFILTGF. Topologically, residues 228-253 are cytoplasmic; sequence VALFHIRKIMKTGGTNTEKLEKLMVK. The chain crosses the membrane as a helical span at residues 254-274; that stretch reads IGVFSILYTVPATCVIVCYFY. The Extracellular portion of the chain corresponds to 275–312; it reads ERLNVDYWNLRALERACVPLPGRRAADCSLEASVPTVA. A helical transmembrane segment spans residues 313–333; the sequence is VFMLKIFMSLVVGITSGVWVW. Over 334–392 the chain is Cytoplasmic; the sequence is SSKTLQTWQSLCNRKLGVRTRGKPCSGVSCGGVHCHYKAPTVMLHMTKTDPYLDNPTHV. The Lys-Thr-X-X-X-Trp motif, mediates interaction with the PDZ domain of Dvl family members signature appears at 336 to 341; sequence KTLQTW. The PDZ-binding motif lies at 390–392; sequence THV.

Belongs to the G-protein coupled receptor Fz/Smo family.

The protein localises to the cell membrane. In terms of biological role, receptor for WNT2 that is coupled to the beta-catenin canonical signaling pathway, which leads to the activation of disheveled proteins, inhibition of GSK-3 kinase, nuclear accumulation of beta-catenin and activation of Wnt target genes. The polypeptide is Frizzled-9 (FZD9) (Gallus gallus (Chicken)).